The sequence spans 326 residues: Pectate lyase plyB (326 aa).

A signal peptide spans 1 to 15 (MRFTPLFLLAAVAIA). The Ca(2+) site is built by aspartate 133, aspartate 162, and aspartate 166. The active site involves arginine 219.

This sequence belongs to the polysaccharide lyase 1 family. Ca(2+) is required as a cofactor.

The protein localises to the secreted. It carries out the reaction Eliminative cleavage of (1-&gt;4)-alpha-D-galacturonan to give oligosaccharides with 4-deoxy-alpha-D-galact-4-enuronosyl groups at their non-reducing ends.. It functions in the pathway glycan metabolism; pectin degradation; 2-dehydro-3-deoxy-D-gluconate from pectin: step 2/5. In terms of biological role, pectinolytic enzyme consist of four classes of enzymes: pectin lyase, polygalacturonase, pectin methylesterase and rhamnogalacturonase. Among pectinolytic enzymes, pectin lyase is the most important in depolymerization of pectin, since it cleaves internal glycosidic bonds of highly methylated pectins. This Emericella nidulans (strain FGSC A4 / ATCC 38163 / CBS 112.46 / NRRL 194 / M139) (Aspergillus nidulans) protein is Pectate lyase plyB (plyB).